A 673-amino-acid chain; its full sequence is MDTQIIAAEKPLMAQARPRKPAPFLPMSRAEMDALGWDACDIVLVTGDAYVDHPSFGMAIIGRLLEAQGFRVGIIAQPDWHSAEPLRALGKPKVFFGVTGGNMDSMVNRYTADRRLRHDDAYTAGGEGGKRPDRCTIVYAQRCREAFKDVPVVLGGIEASLRRIAHYDYWSDKVRRSVLADAKADLLLYGNAERAVVEVANRLAAGEAPRELDDIRGVALFRRVPEDYSELHADDLDSADEGATRQKGATVIRLPALEQVEQDKEAYARASRVLHRESNPGNARPLVQRHGDRDLWLNPPPIPLTSDEMDAVYDLPYARAPHPSYGDAKIPAWDMIKFSVTIMRGCFGGCTFCSITEHEGRIIQNRSEGSILREIEKIRDKTPGFTGVISDIGGPTANMYRMACKDPKVEGACRRPSCVFPEICPNLNTSHDDLIRLYRKVRETKGIKKVMVASGVRYDLAVESPEYIKELVTHHVGGYLKIAPEHTERGPLDKMMKPGIGAYNQFKRMFDAAAEQAGKKYYLIPYFIAAHPGTTDEDMMNLALWLKKNRYRADQVQTFLPSPMATATAMYHTGVNPLRGVRHGGSDKVEAIKGLRQRRLHKAFLRYHDPDNWPVLREALKAMGRADLIGSRPDQLVPAHQPPGTGKAAGTRRPVRPGGKTQRFTTKGLRVMK.

One can recognise a Radical SAM core domain in the interval 332–611; sequence AWDMIKFSVT…KAFLRYHDPD (280 aa). [4Fe-4S] cluster is bound by residues Cys346, Cys350, and Cys353. Positions 632 to 673 are disordered; that stretch reads RPDQLVPAHQPPGTGKAAGTRRPVRPGGKTQRFTTKGLRVMK.

Belongs to the UPF0313 family. [4Fe-4S] cluster is required as a cofactor.

The protein is UPF0313 protein blr7973 of Bradyrhizobium diazoefficiens (strain JCM 10833 / BCRC 13528 / IAM 13628 / NBRC 14792 / USDA 110).